Reading from the N-terminus, the 214-residue chain is ATP phosphoribosyltransferase (214 aa).

The protein belongs to the ATP phosphoribosyltransferase family. Short subfamily. In terms of assembly, heteromultimer composed of HisG and HisZ subunits.

The protein localises to the cytoplasm. It catalyses the reaction 1-(5-phospho-beta-D-ribosyl)-ATP + diphosphate = 5-phospho-alpha-D-ribose 1-diphosphate + ATP. The protein operates within amino-acid biosynthesis; L-histidine biosynthesis; L-histidine from 5-phospho-alpha-D-ribose 1-diphosphate: step 1/9. Catalyzes the condensation of ATP and 5-phosphoribose 1-diphosphate to form N'-(5'-phosphoribosyl)-ATP (PR-ATP). Has a crucial role in the pathway because the rate of histidine biosynthesis seems to be controlled primarily by regulation of HisG enzymatic activity. In Streptococcus gordonii (strain Challis / ATCC 35105 / BCRC 15272 / CH1 / DL1 / V288), this protein is ATP phosphoribosyltransferase.